Reading from the N-terminus, the 435-residue chain is Xylose isomerase (435 aa).

Residues histidine 99 and aspartate 102 contribute to the active site. Mg(2+) is bound by residues glutamate 230, glutamate 266, histidine 269, aspartate 294, aspartate 305, aspartate 307, and aspartate 337.

The protein belongs to the xylose isomerase family. As to quaternary structure, homotetramer. Requires Mg(2+) as cofactor.

Its subcellular location is the cytoplasm. It carries out the reaction alpha-D-xylose = alpha-D-xylulofuranose. The polypeptide is Xylose isomerase (Listeria welshimeri serovar 6b (strain ATCC 35897 / DSM 20650 / CCUG 15529 / CIP 8149 / NCTC 11857 / SLCC 5334 / V8)).